The primary structure comprises 365 residues: Deoxyguanosinetriphosphate triphosphohydrolase-like protein (365 aa).

An HD domain is found at 52–187; the sequence is RLTHSIEVSQ…VDHADEIAYV (136 aa).

It belongs to the dGTPase family. Type 2 subfamily.

This is Deoxyguanosinetriphosphate triphosphohydrolase-like protein from Wolinella succinogenes (strain ATCC 29543 / DSM 1740 / CCUG 13145 / JCM 31913 / LMG 7466 / NCTC 11488 / FDC 602W) (Vibrio succinogenes).